A 159-amino-acid chain; its full sequence is Small ribosomal subunit protein uS7 (159 aa).

It belongs to the universal ribosomal protein uS7 family. Part of the 30S ribosomal subunit. Contacts proteins S9 and S11.

One of the primary rRNA binding proteins, it binds directly to 16S rRNA where it nucleates assembly of the head domain of the 30S subunit. Is located at the subunit interface close to the decoding center, probably blocks exit of the E-site tRNA. This is Small ribosomal subunit protein uS7 from Endomicrobium trichonymphae.